We begin with the raw amino-acid sequence, 48 residues long: MRKKIIFVCQDCLSRNYVKRWTKQPLQRLIINKYCKQCNQKTKHLDSF.

The protein belongs to the bacterial ribosomal protein bL33 family.

This is Large ribosomal subunit protein bL33B (rpmG2) from Mycoplasma genitalium (strain ATCC 33530 / DSM 19775 / NCTC 10195 / G37) (Mycoplasmoides genitalium).